The sequence spans 448 residues: NADP-specific glutamate dehydrogenase (448 aa).

Substrate contacts are provided by Lys-88, Gln-109, and Lys-112. The active-site Proton donor is Lys-124. Gly-163 contacts substrate. Positions 207 and 238 each coordinate NADP(+). A substrate-binding site is contributed by Ser-381.

This sequence belongs to the Glu/Leu/Phe/Val dehydrogenases family. Homohexamer.

It catalyses the reaction L-glutamate + NADP(+) + H2O = 2-oxoglutarate + NH4(+) + NADPH + H(+). Catalyzes the reversible oxidative deamination of glutamate to alpha-ketoglutarate and ammonia. The polypeptide is NADP-specific glutamate dehydrogenase (gdhA) (Helicobacter pylori (strain J99 / ATCC 700824) (Campylobacter pylori J99)).